Here is a 360-residue protein sequence, read N- to C-terminus: Phospho-N-acetylmuramoyl-pentapeptide-transferase (360 aa).

The next 10 helical transmembrane spans lie at 26 to 46, 70 to 90, 94 to 114, 132 to 152, 168 to 188, 199 to 219, 236 to 256, 263 to 283, 288 to 308, and 338 to 358; these read AILSVLTALGLSLWMGPIMIK, GTPTMGGIMILAAISITILLW, SNPYVWAVLTVLLGYGAIGFV, WKYFWQSLIAFVVAFALYAYG, IMPQLGLMYIILTYFVIVGTS, GLAIMPTVLVAAGFAVIAWAT, ASELVVVCTAIVGAGLGFLWF, VFMGDVGSLALGGALGTIAVL, LILVIMGGVFVMETLSVILQV, and VIVRFWIISMVLVLIGLATLK.

It belongs to the glycosyltransferase 4 family. MraY subfamily. Mg(2+) is required as a cofactor.

Its subcellular location is the cell inner membrane. The enzyme catalyses UDP-N-acetyl-alpha-D-muramoyl-L-alanyl-gamma-D-glutamyl-meso-2,6-diaminopimeloyl-D-alanyl-D-alanine + di-trans,octa-cis-undecaprenyl phosphate = di-trans,octa-cis-undecaprenyl diphospho-N-acetyl-alpha-D-muramoyl-L-alanyl-D-glutamyl-meso-2,6-diaminopimeloyl-D-alanyl-D-alanine + UMP. It functions in the pathway cell wall biogenesis; peptidoglycan biosynthesis. Catalyzes the initial step of the lipid cycle reactions in the biosynthesis of the cell wall peptidoglycan: transfers peptidoglycan precursor phospho-MurNAc-pentapeptide from UDP-MurNAc-pentapeptide onto the lipid carrier undecaprenyl phosphate, yielding undecaprenyl-pyrophosphoryl-MurNAc-pentapeptide, known as lipid I. The protein is Phospho-N-acetylmuramoyl-pentapeptide-transferase of Vibrio campbellii (strain ATCC BAA-1116).